The sequence spans 245 residues: Orotidine 5'-phosphate decarboxylase (245 aa).

Residues Asp-22, Lys-44, 71–80 (DLKFHDIPNT), Thr-131, Arg-192, Gln-201, Gly-221, and Arg-222 contribute to the substrate site. Lys-73 (proton donor) is an active-site residue.

The protein belongs to the OMP decarboxylase family. Type 1 subfamily. In terms of assembly, homodimer.

It carries out the reaction orotidine 5'-phosphate + H(+) = UMP + CO2. It participates in pyrimidine metabolism; UMP biosynthesis via de novo pathway; UMP from orotate: step 2/2. In terms of biological role, catalyzes the decarboxylation of orotidine 5'-monophosphate (OMP) to uridine 5'-monophosphate (UMP). The protein is Orotidine 5'-phosphate decarboxylase of Salmonella choleraesuis (strain SC-B67).